The sequence spans 89 residues: MVKLRLKRCGRKQRAIYRIVAIDVRSQREGRDLRKVGFYDPIKNQTYSNVPAILYFLEKGAQPTGTVHDISKKAEVFKELRINQTKSNK.

The protein belongs to the bacterial ribosomal protein bS16 family.

The protein localises to the plastid. It is found in the chloroplast. The sequence is that of Small ribosomal subunit protein bS16c from Drimys granadensis.